Reading from the N-terminus, the 358-residue chain is MHAVTRPTLREAVARLAPGTGLRDGLERILRGRTGALIVLGHDENVEAICDGGFSLDVRYAATRLRELCKMDGAVVLSTDGSRIVRANVQLVPDPSIPTDESGTRHRSAERAAIQTGYPVISVSHSMNIVTVYVRGERHVLTDSATILSRANQAIATLERYKTRLDEVSRQLSRAEIEDFVTLRDVMTVVQRLELVRRIGLVIDYDVVELGTDGRQLRLQLDELLGGNDTARELIVRDYHANPEPPSTGQINATLDELDALSDGDLLDFTALAKVFGYPTTTEAQDSALSPRGYRAMAGIPRLQFAHADLLVRAFGTLQGLLAASAGDLQSVDGIGAMWARHVRDGLSQLAESTISDQ.

The region spanning 6–144 (RPTLREAVAR…RGERHVLTDS (139 aa)) is the DAC domain. ATP-binding positions include glycine 73, leucine 91, and 104–108 (TRHRS).

The protein belongs to the DisA family. Homooctamer. Requires Mg(2+) as cofactor.

The enzyme catalyses 2 ATP = 3',3'-c-di-AMP + 2 diphosphate. Participates in a DNA-damage check-point. DisA forms globular foci that rapidly scan along the chromosomes searching for lesions. In terms of biological role, also has diadenylate cyclase activity, catalyzing the condensation of 2 ATP molecules into cyclic di-AMP (c-di-AMP). c-di-AMP likely acts as a signaling molecule that may couple DNA integrity with a cellular process. This chain is DNA integrity scanning protein DisA, found in Mycobacterium bovis (strain ATCC BAA-935 / AF2122/97).